The sequence spans 451 residues: UBP1-associated protein 2B (451 aa).

Positions 1-86 (MTKKRKLESE…GNEDDDEEEP (86 aa)) are disordered. Basic and acidic residues-rich tracts occupy residues 25-38 (CEKEDPEIRNVDNQ) and 49-63 (DTLKEMHEEEAKGED). Polar residues predominate over residues 67–77 (AETSSGSGNQG). RRM domains follow at residues 128-236 (RKIF…NVSA) and 227-314 (RKIY…QHQH). Disordered stretches follow at residues 302–335 (ANDGPKQVKQHQHNHNSHNQNSRYQRNDNNGYGA) and 423–451 (GGYQTQQPGQGGAGRGQHGAGYGGPYMGR). Over residues 431–451 (GQGGAGRGQHGAGYGGPYMGR) the composition is skewed to gly residues.

As to expression, expressed in shoot meristem and flowers.

It is found in the nucleus. In terms of biological role, heterogeneous nuclear ribonucleoprotein (hnRNP)-like protein that acts as a component of a complex regulating the turnover of mRNAs in the nucleus. Binds with high affinity to RNA molecules that contain U-rich sequences in 3'-UTRs. May function in complex with UBP1 and contribute to the stabilization of mRNAs in the nucleus. This Arabidopsis thaliana (Mouse-ear cress) protein is UBP1-associated protein 2B (UBA2B).